A 135-amino-acid polypeptide reads, in one-letter code: Ribonuclease P protein component (135 aa).

This sequence belongs to the RnpA family. As to quaternary structure, consists of a catalytic RNA component (M1 or rnpB) and a protein subunit.

The enzyme catalyses Endonucleolytic cleavage of RNA, removing 5'-extranucleotides from tRNA precursor.. Its function is as follows. RNaseP catalyzes the removal of the 5'-leader sequence from pre-tRNA to produce the mature 5'-terminus. It can also cleave other RNA substrates such as 4.5S RNA. The protein component plays an auxiliary but essential role in vivo by binding to the 5'-leader sequence and broadening the substrate specificity of the ribozyme. This Xylella fastidiosa (strain Temecula1 / ATCC 700964) protein is Ribonuclease P protein component.